The sequence spans 2269 residues: Anaphase-promoting complex subunit 1 (2269 aa).

Disordered stretches follow at residues 305 to 334 (PSSNAENDNTNNNNNNNNTNTNISNNQTIN), 379 to 433 (SSPP…QENS), 609 to 644 (NNNNNNNNNNNNNNNNNNNNNNNNNNNNNNNKRKPL), 804 to 845 (KVYP…NNNN), and 1136 to 1197 (STAS…NSTS). Composition is skewed to low complexity over residues 306–334 (SSNAENDNTNNNNNNNNTNTNISNNQTIN), 379–430 (SSPP…QQQQ), 609–638 (NNNNNNNNNNNNNNNNNNNNNNNNNNNNNN), 809–845 (NNNNNNNNNNNNNNNNNNNNNNNNNNNNNNNNNNNNN), and 1136–1159 (STASSSSNEMNSNSNITSINGQSN). Over residues 1160 to 1177 (GLPMNSTTNQMNSHQINN) the composition is skewed to polar residues. PC repeat units follow at residues 1440 to 1472 (AALMGIGLLYCQTSNRRMTEVLLMEIGRKPIND) and 1483 to 1520 (TAGMALGLVNLGKGANEGSLTDLHVEDRLRSFIGISKE). The disordered stretch occupies residues 1535–1586 (STPSISSNRNNNDLFNNGSNNNSSSNGGGGGGGGNNNGNNSNNGNNGSSQFK). Low complexity predominate over residues 1540–1559 (SSNRNNNDLFNNGSNNNSSS). The segment covering 1560-1570 (NGGGGGGGGNN) has biased composition (gly residues). Low complexity predominate over residues 1571–1583 (NGNNSNNGNNGSS). PC repeat units lie at residues 1605–1637 (GAIIALSLIYLKTNNLKISNYLSIPDTTFGLNY), 1722–1756 (GAAFSIGLKYAGSLNENAFSLLMDLIQLFRKRQVY), and 1792–1807 (LVMAGSGNLETLKILR). Over residues 1960 to 1993 (NNNNNNNNNNNNNNNNNNNNNNNNNNNNNNNNNN) the composition is skewed to low complexity. Residues 1960–1997 (NNNNNNNNNNNNNNNNNNNNNNNNNNNNNNNNNNKNIL) form a disordered region.

Belongs to the APC1 family. In terms of assembly, the APC/C is composed of at least 13 subunits that stay tightly associated throughout the cell cycle: anapc1, anapc2, anapc3, anapc4, anapc5, anapc6, anapc7, anapc8, anapc10, anapc11, cdc20, cdc26 and cdh1.

It is found in the nucleus. It participates in protein modification; protein ubiquitination. Functionally, component of the anaphase promoting complex/cyclosome (APC/C), a cell cycle-regulated E3 ubiquitin-protein ligase complex that controls progression through mitosis and the G1 phase of the cell cycle. The protein is Anaphase-promoting complex subunit 1 (anapc1) of Dictyostelium discoideum (Social amoeba).